Here is a 483-residue protein sequence, read N- to C-terminus: MASLLWGGDAGAAESERLNSHFSNLSQPRKNLWGIKSTAVRNIDGSINNINEDDEEDVVDLAANSLLNKLIHQSLVESSHRVEVLQKDPSSPLYSVKTFEELRLKEELLKGIYAMGFNRPSKIQEMALPMMLAHPPQNLIAQSQSGTGKTAAFVLAMLSRVNALELFPQCLCLAPTYELALQTGRVVEQMGKFCVDVQVMYAIRGNRIPRGTDITKQIIIGTPGTVLDWCFKLKLIDLTKIRVFVLDEADVMIDTQGFSDHSIRIQRALPSECQMLLFSATFEDSVWHFAERIIPDPNVIKLRKEELTLNNIRQYYVLCEHRKDKYQALCNIYGSITIGQAIIFCQTRRNAKWLTVEMIQDGHQVSLLSGELTVEQRASIIQRFRDGKEKVLITTNVCARGIDVKQVTIVVNFDLPVKQGEEPDYETYLHRIGRTGRFGKKGLAFNMIEVDELPSLMKIQDHFNSSIKQLNAEDMDEIEKIDY.

The Nuclear export signal motif lies at 61–74 (LAANSLLNKLIHQS). The short motif at 97–125 (KTFEELRLKEELLKGIYAMGFNRPSKIQE) is the Q motif element. The Nuclear localization signal signature appears at 100–114 (EELRLKEELLKGIYA). The Helicase ATP-binding domain maps to 130–300 (MMLAHPPQNL…ERIIPDPNVI (171 aa)). Position 143 to 150 (143 to 150 (SQSGTGKT)) interacts with ATP. The short motif at 247 to 250 (DEAD) is the DEAD box element. Positions 311–478 (NIRQYYVLCE…QLNAEDMDEI (168 aa)) constitute a Helicase C-terminal domain.

This sequence belongs to the DEAD box helicase family. Phosphorylated on threonine residues. The phosphorylated form is found in the cytoplasm but not in the nucleus. In terms of tissue distribution, highly expressed in the Leydig and germ cells of the testis and weakly expressed in the pituitary and hypothalamus.

It localises to the cytoplasm. Its subcellular location is the nucleus. It catalyses the reaction ATP + H2O = ADP + phosphate + H(+). ATP-dependent RNA helicase. Required for mRNA export and translation regulation during spermatid development. The protein is ATP-dependent RNA helicase DDX25 (DDX25) of Homo sapiens (Human).